The chain runs to 329 residues: tRNA pseudouridine synthase B (329 aa).

The active-site Nucleophile is the aspartate 42.

It belongs to the pseudouridine synthase TruB family. Type 1 subfamily.

It catalyses the reaction uridine(55) in tRNA = pseudouridine(55) in tRNA. In terms of biological role, responsible for synthesis of pseudouridine from uracil-55 in the psi GC loop of transfer RNAs. The sequence is that of tRNA pseudouridine synthase B from Lactococcus lactis subsp. lactis (strain IL1403) (Streptococcus lactis).